A 147-amino-acid chain; its full sequence is MTSQPVLNAEQIMGLLPHRYPFALVDRVLEHVPGEKAVAIKNVTLNEPQFQGHFPDRPLMPGVLIVEAMAQVGGLIVTQMPDLPKGLFVFAGIDGVRFRRPVVPGDQLRISCELLSLKRQRFGKVKAEATVEGQLVCSGELMFSLVD.

The active site involves His53.

Belongs to the thioester dehydratase family. FabZ subfamily.

Its subcellular location is the cytoplasm. It carries out the reaction a (3R)-hydroxyacyl-[ACP] = a (2E)-enoyl-[ACP] + H2O. In terms of biological role, involved in unsaturated fatty acids biosynthesis. Catalyzes the dehydration of short chain beta-hydroxyacyl-ACPs and long chain saturated and unsaturated beta-hydroxyacyl-ACPs. The polypeptide is 3-hydroxyacyl-[acyl-carrier-protein] dehydratase FabZ (Synechococcus sp. (strain WH7803)).